We begin with the raw amino-acid sequence, 518 residues long: ATP synthase subunit alpha (518 aa).

Position 169-176 (G169–T176) interacts with ATP.

This sequence belongs to the ATPase alpha/beta chains family. In terms of assembly, F-type ATPases have 2 components, CF(1) - the catalytic core - and CF(0) - the membrane proton channel. CF(1) has five subunits: alpha(3), beta(3), gamma(1), delta(1), epsilon(1). CF(0) has three main subunits: a(1), b(2) and c(9-12). The alpha and beta chains form an alternating ring which encloses part of the gamma chain. CF(1) is attached to CF(0) by a central stalk formed by the gamma and epsilon chains, while a peripheral stalk is formed by the delta and b chains.

It localises to the cell membrane. The enzyme catalyses ATP + H2O + 4 H(+)(in) = ADP + phosphate + 5 H(+)(out). Its function is as follows. Produces ATP from ADP in the presence of a proton gradient across the membrane. The alpha chain is a regulatory subunit. This Enterococcus faecalis (strain ATCC 700802 / V583) protein is ATP synthase subunit alpha.